The primary structure comprises 109 residues: Cell division protein ZapA (109 aa).

The stretch at 21–99 forms a coiled coil; it reads PEQQDALNQA…IEQALLEQGR (79 aa).

The protein belongs to the ZapA family. Type 1 subfamily. Homodimer. Interacts with FtsZ.

It localises to the cytoplasm. Activator of cell division through the inhibition of FtsZ GTPase activity, therefore promoting FtsZ assembly into bundles of protofilaments necessary for the formation of the division Z ring. It is recruited early at mid-cell but it is not essential for cell division. The polypeptide is Cell division protein ZapA (Pectobacterium carotovorum subsp. carotovorum (strain PC1)).